A 313-amino-acid chain; its full sequence is tRNA dimethylallyltransferase (313 aa).

14-21 (GPTASGKT) lines the ATP pocket. Substrate is bound at residue 16–21 (TASGKT). 2 interaction with substrate tRNA regions span residues 39–42 (DSAL) and 163–167 (QRIGR).

The protein belongs to the IPP transferase family. In terms of assembly, monomer. Mg(2+) serves as cofactor.

The enzyme catalyses adenosine(37) in tRNA + dimethylallyl diphosphate = N(6)-dimethylallyladenosine(37) in tRNA + diphosphate. In terms of biological role, catalyzes the transfer of a dimethylallyl group onto the adenine at position 37 in tRNAs that read codons beginning with uridine, leading to the formation of N6-(dimethylallyl)adenosine (i(6)A). This chain is tRNA dimethylallyltransferase, found in Thiobacillus denitrificans (strain ATCC 25259 / T1).